We begin with the raw amino-acid sequence, 288 residues long: Energy-coupling factor transporter ATP-binding protein EcfA2 (288 aa).

The ABC transporter domain maps to 3-243; the sequence is IVFEAVSHIY…RAELEAIGLG (241 aa). 40-47 lines the ATP pocket; it reads GPTGSGKS.

Belongs to the ABC transporter superfamily. Energy-coupling factor EcfA family. In terms of assembly, forms a stable energy-coupling factor (ECF) transporter complex composed of 2 membrane-embedded substrate-binding proteins (S component), 2 ATP-binding proteins (A component) and 2 transmembrane proteins (T component).

The protein localises to the cell membrane. Its function is as follows. ATP-binding (A) component of a common energy-coupling factor (ECF) ABC-transporter complex. Unlike classic ABC transporters this ECF transporter provides the energy necessary to transport a number of different substrates. This is Energy-coupling factor transporter ATP-binding protein EcfA2 from Symbiobacterium thermophilum (strain DSM 24528 / JCM 14929 / IAM 14863 / T).